The sequence spans 785 residues: MKMAPQNADSESMQVQELPVPLPDPQKPRDPEAETQEETTSEGSIDRIPTRLWVMHGAVMFGREFCYAMETALVTPILLQIGLPEKYYSLTWFLSPVLGLIFTPLIGSASDRCTLSWGRRRPFILALCVGVLIGVALFLNGSAIGLALGDVPSRQPIGIVLTVLGVVVLDFSADATEGPIRAYLLDVVDSEEQDMALNIHAFSAGLGGAIGYVLGGLDWTQTFLGDWFQTQNQVLFFFAAVIFSVSVALHLFSIEEEQYSPQQDRGPEDPTLPGTSVQPGAPAPASRLSSLGGGMQDGSPPFPDEVQSEHELSLDYLDVDIVRSKSDSVLHMADATLDMEPQLLFLHDIEPSIFQDASYPSTPQSTSQELLRAKLPRLSTFLRESTKEDDTLLDNHLNEAKVPNGRGSPPINSLSRSKVDLKPSVTSGSMRRRRHMFHRQASSTFSYYGKIGSHCYRYRRANAVVLIKPSRSMSDLYDLQQRQRSRHRNQSGATASSGDTESEEGETETTVRLLWLSMLKMPKELMWLCLCHLLTWFSVIAEAVFYTDFMGQVIFKGNPQAPSNSTKWHAYNAGVKMGCWGLVIYAATGAICSALLQKYLDNYDLSIRIIYMLGTLGFSVGTAVMAMFPNVYVAMVTISTMGVVSMSISYCPYALLGHYHDIKEYVHHSPGNSKRGFGIDCAILSCQVYISQILVASALGGVVDAVNSIVVIPIVASVGSFLGFLTATFLVIYPEVSEEPKEEQKGLSSGPAGEGEGGAGSEKPTVLKLSRKGGLRGLVETESMV.

Positions 1-43 (MKMAPQNADSESMQVQELPVPLPDPQKPRDPEAETQEETTSEG) are disordered. The next 6 helical transmembrane spans lie at 64–84 (EFCY…IGLP), 87–107 (YYSL…PLIG), 124–144 (ILAL…GSAI), 156–176 (PIGI…ADAT), 197–217 (LNIH…LGGL), and 234–254 (VLFF…LFSI). Disordered regions lie at residues 259 to 309 (YSPQ…VQSE) and 401 to 430 (KVPN…SGSM). Phosphoserine occurs at positions 442 and 472. The segment at 478–505 (DLQQRQRSRHRNQSGATASSGDTESEEG) is disordered. The segment covering 490–499 (QSGATASSGD) has biased composition (low complexity). Phosphoserine is present on S502. The next 6 membrane-spanning stretches (helical) occupy residues 525–545 (LMWL…EAVF), 577–597 (MGCW…ALLQ), 609–629 (IIYM…AMFP), 631–651 (VYVA…ISYC), 683–703 (ILSC…GGVV), and 709–729 (IVVI…TATF). The tract at residues 741 to 772 (KEEQKGLSSGPAGEGEGGAGSEKPTVLKLSRK) is disordered. Residue S749 is modified to Phosphoserine.

This sequence belongs to the glycoside-pentoside-hexuronide (GPH) cation symporter transporter (TC 2.A.2) family. As to expression, ubiquitously expressed.

The protein resides in the membrane. The enzyme catalyses sucrose(out) + H(+)(out) = sucrose(in) + H(+)(in). Its function is as follows. Proton-associated sucrose transporter. May be able to transport also glucose and fructose. This chain is Solute carrier family 45 member 4 (Slc45a4), found in Mus musculus (Mouse).